Reading from the N-terminus, the 605-residue chain is Proline--tRNA ligase (605 aa).

It belongs to the class-II aminoacyl-tRNA synthetase family. ProS type 1 subfamily. In terms of assembly, homodimer.

It is found in the cytoplasm. It carries out the reaction tRNA(Pro) + L-proline + ATP = L-prolyl-tRNA(Pro) + AMP + diphosphate. Functionally, catalyzes the attachment of proline to tRNA(Pro) in a two-step reaction: proline is first activated by ATP to form Pro-AMP and then transferred to the acceptor end of tRNA(Pro). As ProRS can inadvertently accommodate and process non-cognate amino acids such as alanine and cysteine, to avoid such errors it has two additional distinct editing activities against alanine. One activity is designated as 'pretransfer' editing and involves the tRNA(Pro)-independent hydrolysis of activated Ala-AMP. The other activity is designated 'posttransfer' editing and involves deacylation of mischarged Ala-tRNA(Pro). The misacylated Cys-tRNA(Pro) is not edited by ProRS. In Bifidobacterium adolescentis (strain ATCC 15703 / DSM 20083 / NCTC 11814 / E194a), this protein is Proline--tRNA ligase.